Here is a 629-residue protein sequence, read N- to C-terminus: Pescadillo homolog (629 aa).

Positions 321–414 (RLRTLFKGLK…QLLPTNKYFI (94 aa)) constitute a BRCT domain. Disordered stretches follow at residues 439-470 (KALL…ETVD), 488-568 (EYKK…MVKP), and 598-629 (IEAS…KLGK). Residues Ser453 and Ser457 each carry the phosphoserine modification. 2 stretches are compositionally biased toward acidic residues: residues 454–470 (DEDS…ETVD) and 498–523 (VNED…EELD). The span at 524–535 (EKSKRLQEEKQK) shows a compositional bias: basic and acidic residues. The segment covering 542–551 (KVHKVNKRQV) has biased composition (basic residues). Composition is skewed to basic and acidic residues over residues 552–561 (HKAEVDEHRL) and 598–617 (IEAS…RKEA). The stretch at 584–627 (KEKEEWLLRKKRRTIEASEKEARKTAKREARKEAAAAAAKASKL) forms a coiled coil. The span at 618–629 (AAAAAKASKLGK) shows a compositional bias: low complexity.

It belongs to the pescadillo family.

Its subcellular location is the nucleus. It localises to the nucleolus. It is found in the nucleoplasm. Its function is as follows. Required for maturation of ribosomal RNAs and formation of the large ribosomal subunit. This is Pescadillo homolog from Drosophila erecta (Fruit fly).